Reading from the N-terminus, the 588-residue chain is Probable fumarate reductase Ifc3 (588 aa).

Residues 1–22 (MKLKYLVSAMALVVLSSGTAMA) form the signal peptide. 17 residues coordinate heme c: His31, Cys37, Cys40, His41, Cys58, Cys61, His62, His78, His81, Cys87, Cys90, His91, Gly93, His94, Cys101, Cys104, and His105. Residues 135–588 (AIAAGPSETT…DNAAKHALDK (454 aa)) are flavoprotein-like. The FAD site is built by Ala154, Asp173, Asn181, Ser182, Gly187, and Gly188. Residue Gly187 coordinates fumarate. Position 187 (Gly187) interacts with succinate. Arg218 lines the heme c pocket. Residues Val295 and Asp361 each contribute to the FAD site. His382, Ser394, and Glu395 together coordinate succinate. Residues Ser394 and Glu395 each contribute to the fumarate site. The active-site Proton donor is Arg419. His521 contacts fumarate. His521 contributes to the succinate binding site. An FAD-binding site is contributed by Glu551. Fumarate-binding residues include Arg561 and Gly564. Succinate-binding residues include Arg561 and Gly564. Residues Gly564, Ala566, and Ile567 each coordinate FAD.

Homodimer. FAD is required as a cofactor. Heme c serves as cofactor.

It is found in the periplasm. Flavocytochrome that catalyzes the reduction of fumarate to succinate in vitro. Is essentially unidirectional, catalyzing only fumarate reduction. In vitro, can use the artificial electron donor methyl viologen. May be involved in an alternative route for electron transport to Fe(3+). The sequence is that of Probable fumarate reductase Ifc3 from Shewanella frigidimarina (strain NCIMB 400).